The sequence spans 361 residues: Mannose-1-phosphate guanyltransferase (361 aa).

Belongs to the transferase hexapeptide repeat family.

The protein localises to the cytoplasm. The catalysed reaction is alpha-D-mannose 1-phosphate + GTP + H(+) = GDP-alpha-D-mannose + diphosphate. It participates in nucleotide-sugar biosynthesis; GDP-alpha-D-mannose biosynthesis; GDP-alpha-D-mannose from alpha-D-mannose 1-phosphate (GTP route): step 1/1. Functionally, involved in cell wall synthesis where it is required for glycosylation. Involved in cell cycle progression through cell-size checkpoint. The sequence is that of Mannose-1-phosphate guanyltransferase (MPG1) from Kluyveromyces lactis (strain ATCC 8585 / CBS 2359 / DSM 70799 / NBRC 1267 / NRRL Y-1140 / WM37) (Yeast).